The following is a 244-amino-acid chain: Extracellular superoxide dismutase [Cu-Zn] (244 aa).

A signal peptide spans 1–15; sequence MVAFLFCNLLLVACG. 2 disulfide bridges follow: cysteine 70–cysteine 215 and cysteine 132–cysteine 214. N-linked (GlcNAc...) asparagine glycosylation is present at asparagine 114. Cu cation is bound by residues histidine 121, histidine 123, and histidine 138. Residues histidine 138, histidine 146, histidine 149, and aspartate 152 each contribute to the Zn(2+) site. Histidine 188 contributes to the Cu cation binding site. Residues 224–244 are disordered; that stretch reads AWESQTKERKKRRRESECKTT.

It belongs to the Cu-Zn superoxide dismutase family. Homodimer. Interacts with ATP7A; this interaction is copper-dependent and is required for SOD3 activity. Cu cation serves as cofactor. It depends on Zn(2+) as a cofactor.

It localises to the secreted. The protein resides in the extracellular space. It is found in the golgi apparatus. Its subcellular location is the trans-Golgi network. It carries out the reaction 2 superoxide + 2 H(+) = H2O2 + O2. Functionally, protect the extracellular space from toxic effect of reactive oxygen intermediates by converting superoxide radicals into hydrogen peroxide and oxygen. The protein is Extracellular superoxide dismutase [Cu-Zn] (Sod3) of Rattus norvegicus (Rat).